A 484-amino-acid chain; its full sequence is MSVTSDAAVTLHSRFARELPELAIGWQAEPAPAPRLLVLNDALATELGLDADWLRSPDGIGLLLGTDVPEGATPVAQAYAGHQFGGYVPRLGDGRALLLGELTDVHGRTRDLHLKGSGRTPFARGGDGLAVVGPMLREYIVSEAMHALGIPTTRSLAVVATGRDVWRETKQPGAVLARVASSHLRVGSFQYAYQYATAAKDDEVLRRLADHAISRHHPQAAEADNPYLALFEAVVSAQASLLAQWMLVGFIHGVMNTDNMTIAGETIDYGPCAFMDTFDPATVFSSIDHGGRYAYGNQPAVAHWNLARFAETLLPLIAEDVDTAVDLVTAALGQFPQQFDTAWSTGMRTKLGLSARVDHTTATALVNDLLVLLQQTRTDYTSAFRDLGRVARGAQPSLPFTDEWLSRWRACDPDPDVMDRVNPVYIPRNHLVEDALTAATTGDLAPLATLMTALKTPFTERAGFEAHAAPAPEDFGPYRTFCGT.

Residues Gly-92, Gly-94, Arg-95, Lys-115, Asp-127, Gly-128, Arg-178, and Arg-185 each contribute to the ATP site. Asp-258 acts as the Proton acceptor in catalysis. Mg(2+) is bound by residues Asn-259 and Asp-268. Asp-268 provides a ligand contact to ATP.

It belongs to the SELO family. Mg(2+) serves as cofactor. It depends on Mn(2+) as a cofactor.

It carries out the reaction L-seryl-[protein] + ATP = 3-O-(5'-adenylyl)-L-seryl-[protein] + diphosphate. The catalysed reaction is L-threonyl-[protein] + ATP = 3-O-(5'-adenylyl)-L-threonyl-[protein] + diphosphate. The enzyme catalyses L-tyrosyl-[protein] + ATP = O-(5'-adenylyl)-L-tyrosyl-[protein] + diphosphate. It catalyses the reaction L-histidyl-[protein] + UTP = N(tele)-(5'-uridylyl)-L-histidyl-[protein] + diphosphate. It carries out the reaction L-seryl-[protein] + UTP = O-(5'-uridylyl)-L-seryl-[protein] + diphosphate. The catalysed reaction is L-tyrosyl-[protein] + UTP = O-(5'-uridylyl)-L-tyrosyl-[protein] + diphosphate. Nucleotidyltransferase involved in the post-translational modification of proteins. It can catalyze the addition of adenosine monophosphate (AMP) or uridine monophosphate (UMP) to a protein, resulting in modifications known as AMPylation and UMPylation. This chain is Protein nucleotidyltransferase YdiU, found in Mycolicibacterium smegmatis (strain ATCC 700084 / mc(2)155) (Mycobacterium smegmatis).